A 277-amino-acid polypeptide reads, in one-letter code: MQHERPTHGMNIPALRRRKQVLDLAEETVAIEVPGLSLFYGDKQALFDIALNIPKQKVTSFIGPSGCGKSTLLRSFNRMNDLVDGCRVEGAINLYGHNIYTKGEEVAELRRRVGMVFQKPNPFPKTIYENVVYGLRIQGINKKRVLDEAVAWALKAAALWDEVKDRLHESALGLSGGQQQRLVIARTIAVEPEVLLLDEPCSALDPISTLKVEELIYELKSKYTIVIVTHNMQQAARVSDYTAFMYMGKLVEFGDTDTLFTNPAKKQTEDYITGRYG.

The region spanning 31-272 (IEVPGLSLFY…PAKKQTEDYI (242 aa)) is the ABC transporter domain. 63–70 (GPSGCGKS) provides a ligand contact to ATP.

The protein belongs to the ABC transporter superfamily. Phosphate importer (TC 3.A.1.7) family. In terms of assembly, the complex is composed of two ATP-binding proteins (PstB), two transmembrane proteins (PstC and PstA) and a solute-binding protein (PstS).

It localises to the cell inner membrane. The catalysed reaction is phosphate(out) + ATP + H2O = ADP + 2 phosphate(in) + H(+). Functionally, part of the ABC transporter complex PstSACB involved in phosphate import. Responsible for energy coupling to the transport system. This is Phosphate import ATP-binding protein PstB 2 from Pseudomonas syringae pv. tomato (strain ATCC BAA-871 / DC3000).